Reading from the N-terminus, the 405-residue chain is Arginine biosynthesis bifunctional protein ArgJ (405 aa).

Residues T152, K178, T189, E276, N400, and S405 each coordinate substrate. T189 functions as the Nucleophile in the catalytic mechanism.

The protein belongs to the ArgJ family. As to quaternary structure, heterotetramer of two alpha and two beta chains.

Its subcellular location is the cytoplasm. The catalysed reaction is N(2)-acetyl-L-ornithine + L-glutamate = N-acetyl-L-glutamate + L-ornithine. It carries out the reaction L-glutamate + acetyl-CoA = N-acetyl-L-glutamate + CoA + H(+). The protein operates within amino-acid biosynthesis; L-arginine biosynthesis; L-ornithine and N-acetyl-L-glutamate from L-glutamate and N(2)-acetyl-L-ornithine (cyclic): step 1/1. Its pathway is amino-acid biosynthesis; L-arginine biosynthesis; N(2)-acetyl-L-ornithine from L-glutamate: step 1/4. In terms of biological role, catalyzes two activities which are involved in the cyclic version of arginine biosynthesis: the synthesis of N-acetylglutamate from glutamate and acetyl-CoA as the acetyl donor, and of ornithine by transacetylation between N(2)-acetylornithine and glutamate. The protein is Arginine biosynthesis bifunctional protein ArgJ of Chromobacterium violaceum (strain ATCC 12472 / DSM 30191 / JCM 1249 / CCUG 213 / NBRC 12614 / NCIMB 9131 / NCTC 9757 / MK).